The chain runs to 58 residues: Rho-conotoxin TIA (58 aa).

The signal sequence occupies residues 1–16; it reads MFTVFLLVVLATTGVS. A propeptide spanning residues 17–38 is cleaved from the precursor; it reads FTLDRASDGGNAVAKKSDVTAR. Residues 40 to 42 are interaction with ADRA1B; that stretch reads NWR. Disulfide bonds link C43/C49 and C44/C57. A lacks the Ser-Xaa-Pro motif that is crucial for potent interaction with nAChR region spans residues 45-47; the sequence is LIP. C57 is modified (cysteine amide).

The protein belongs to the conotoxin A superfamily. As to expression, expressed by the venom duct.

The protein localises to the secreted. Allosteric inhibitor of alpha-1B adrenergic receptors (ADRA1B). Binds to an allosteric modulatory site on transmembrane helix 6 and 7 at the base of extracellular loop 3 of ADRA1B. Also weakly inhibits alpha-1A (ADRA1A) and alpha-1D (ADRA1D) adrenergic receptors in a competitive manner. Potently inhibits contractions of vas deferens, spleen and aorta in response to noradrenaline. May also inhibits nicotinic acetylcholine receptors with a possible distinct nAChR binding mode from other alpha-conotoxins, due to a different three residue motif (lacks the Ser-Xaa-Pro motif). The chain is Rho-conotoxin TIA from Conus tulipa (Fish-hunting cone snail).